A 556-amino-acid polypeptide reads, in one-letter code: 2-succinyl-5-enolpyruvyl-6-hydroxy-3-cyclohexene-1-carboxylate synthase (556 aa).

The protein belongs to the TPP enzyme family. MenD subfamily. Homodimer. It depends on Mg(2+) as a cofactor. Mn(2+) serves as cofactor. Thiamine diphosphate is required as a cofactor.

It carries out the reaction isochorismate + 2-oxoglutarate + H(+) = 5-enolpyruvoyl-6-hydroxy-2-succinyl-cyclohex-3-ene-1-carboxylate + CO2. It participates in quinol/quinone metabolism; 1,4-dihydroxy-2-naphthoate biosynthesis; 1,4-dihydroxy-2-naphthoate from chorismate: step 2/7. The protein operates within quinol/quinone metabolism; menaquinone biosynthesis. In terms of biological role, catalyzes the thiamine diphosphate-dependent decarboxylation of 2-oxoglutarate and the subsequent addition of the resulting succinic semialdehyde-thiamine pyrophosphate anion to isochorismate to yield 2-succinyl-5-enolpyruvyl-6-hydroxy-3-cyclohexene-1-carboxylate (SEPHCHC). In Salmonella paratyphi A (strain AKU_12601), this protein is 2-succinyl-5-enolpyruvyl-6-hydroxy-3-cyclohexene-1-carboxylate synthase.